Consider the following 961-residue polypeptide: Rho guanine nucleotide exchange factor 2 (961 aa).

The Phorbol-ester/DAG-type zinc finger occupies 12–59 (GHLFTTISVSGMTMCYACNKSITAKEALICPTCNVTIHNRCKDTLANC). Ser-82, Ser-95, Ser-102, Ser-106, Ser-110, Ser-124, Ser-136, Ser-145, Ser-147, and Ser-150 each carry phosphoserine. The segment at 104–134 (RQSLLGSRRGRSPLSLAKSVSTTNIAGHFND) is interaction with DYNLT1. The region spanning 209–406 (KQQDVIYELI…KELLSNVDQD (198 aa)) is the DH domain. The residue at position 327 (Lys-327) is an N6-acetyllysine. A PH domain is found at 446–545 (KLIHDGCLLW…WIRVIQQSVR (100 aa)). Residues 561–588 (EAYLRRIKMELQQKDRALVELLQEKVGL) are a coiled coil. Residues Ser-619 and Ser-622 each carry the phosphoserine modification. A Phosphothreonine; by MAPK1 or MAPK3 modification is found at Thr-653. The tract at residues 659–679 (LPVETDSGGNTSPGVTANGEA) is disordered. Phosphoserine is present on residues Ser-665, Ser-670, Ser-685, and Ser-756. Residues 742 to 761 (PEGPERREKLTRANSRDGEA) are compositionally biased toward basic and acidic residues. The interval 742-770 (PEGPERREKLTRANSRDGEAGRAGAAPVA) is disordered. Residues 772–841 (EKQATELALL…RQLAALGHTE (70 aa)) are a coiled coil. Ser-860 carries the phosphoserine; by PAK1 and AURKA modification. Residues 867-961 (LYLSFTPPQP…RDGEPVASES (95 aa)) are disordered. Position 868 is a phosphotyrosine (Tyr-868). A Phosphoserine; by PAK4 modification is found at Ser-870. Basic and acidic residues predominate over residues 894-913 (RPFEDRERQELGSPDERLQD). 3 positions are modified to phosphoserine: Ser-906, Ser-914, and Ser-915. Acidic residues predominate over residues 915–925 (SDPDTGSEEEG). A Phosphothreonine modification is found at Thr-919. A phosphoserine mark is found at Ser-921, Ser-927, Ser-928, and Ser-931. Ser-935 is modified (phosphoserine; by CDK1).

In terms of assembly, found in a complex composed at least of ARHGEF2, NOD2 and RIPK2. Interacts with RIPK2; the interaction mediates tyrosine phosphorylation of RIPK2 by Src kinase CSK. Interacts with RIPK1 and RIPK3. Interacts with YWHAZ/14-3-3 zeta; when phosphorylated at Ser-860. Interacts with the kinases PAK4, AURKA and MAPK1. Interacts with RHOA and RAC1. Interacts with NOD1. Interacts (via the N- terminal zinc finger) with CAPN6 (via domain II). Interacts with DYNLT1. In terms of processing, phosphorylation of Ser-860 by PAK1 induces binding to protein YWHAZ, promoting its relocation to microtubules and the inhibition of its activity. Phosphorylated by AURKA and CDK1 during mitosis, which negatively regulates its activity. Phosphorylation by MAPK1 or MAPK3 increases nucleotide exchange activity. Phosphorylation by PAK4 releases GEF-H1 from the microtubules. Phosphorylated on serine, threonine and tyrosine residues in a RIPK2-dependent manner.

It localises to the cytoplasm. The protein localises to the cytoskeleton. It is found in the cell junction. Its subcellular location is the tight junction. The protein resides in the golgi apparatus. It localises to the spindle. The protein localises to the cytoplasmic vesicle. In terms of biological role, activates Rho-GTPases by promoting the exchange of GDP for GTP. May be involved in epithelial barrier permeability, cell motility and polarization, dendritic spine morphology, antigen presentation, leukemic cell differentiation, cell cycle regulation, innate immune response, and cancer. Binds Rac-GTPases, but does not seem to promote nucleotide exchange activity toward Rac-GTPases. May stimulate instead the cortical activity of Rac. Inactive toward CDC42, TC10, or Ras-GTPases. Forms an intracellular sensing system along with NOD1 for the detection of microbial effectors during cell invasion by pathogens. Involved in innate immune signaling transduction pathway promoting cytokine IL6/interleukin-6 and TNF-alpha secretion in macrophage upon stimulation by bacterial peptidoglycans; acts as a signaling intermediate between NOD2 receptor and RIPK2 kinase. Contributes to the tyrosine phosphorylation of RIPK2 through Src tyrosine kinase leading to NF-kappaB activation by NOD2. Overexpression activates Rho-, but not Rac-GTPases, and increases paracellular permeability. Involved in neuronal progenitor cell division and differentiation. Involved in the migration of precerebellar neurons. This is Rho guanine nucleotide exchange factor 2 (ARHGEF2) from Sus scrofa (Pig).